Consider the following 147-residue polypeptide: 3-dehydroquinate dehydratase (147 aa).

Tyrosine 26 serves as the catalytic Proton acceptor. Residues asparagine 77, histidine 83, and aspartate 90 each coordinate substrate. The active-site Proton donor is histidine 103. Substrate-binding positions include 104–105 (LS) and arginine 114.

Belongs to the type-II 3-dehydroquinase family. Homododecamer.

The enzyme catalyses 3-dehydroquinate = 3-dehydroshikimate + H2O. Its pathway is metabolic intermediate biosynthesis; chorismate biosynthesis; chorismate from D-erythrose 4-phosphate and phosphoenolpyruvate: step 3/7. In terms of biological role, catalyzes a trans-dehydration via an enolate intermediate. The sequence is that of 3-dehydroquinate dehydratase from Proteus mirabilis (strain HI4320).